Consider the following 151-residue polypeptide: MGAMHSRGKGISSSALPYKRTPPTWLKTAASDVEEMITKAAKKGQMPSQIGVLLRDQHGIPLVKSVTGSKILRILKAHGLAPEIPEDLYFLIKKAVAIRKHLERNRKDKDSKFRLILVESRIHRLARYYKRTKKLPPTWKYESTTASTLVA.

Belongs to the universal ribosomal protein uS15 family.

This chain is Small ribosomal subunit protein uS15 (RPS13), found in Zea mays (Maize).